The sequence spans 334 residues: Ventral anterior homeobox 1 (334 aa).

Residues Met1–Gly34 are compositionally biased toward basic and acidic residues. The disordered stretch occupies residues Met1–Ala41. The segment at residues Pro100–Gln159 is a DNA-binding region (homeobox). Disordered regions lie at residues Pro234 to Ala263 and Ser314 to Asp334. The segment covering Asn323–Asp334 has biased composition (basic and acidic residues).

It belongs to the EMX homeobox family.

The protein localises to the nucleus. Functionally, transcription factor that may function in dorsoventral specification of the forebrain. Required for axon guidance and major tract formation in the developing forebrain. May contribute to the differentiation of the neuroretina, pigmented epithelium and optic stalk. The protein is Ventral anterior homeobox 1 (VAX1) of Homo sapiens (Human).